A 620-amino-acid polypeptide reads, in one-letter code: Dihydroxy-acid dehydratase (620 aa).

Aspartate 82 serves as a coordination point for Mg(2+). Cysteine 123 contacts [2Fe-2S] cluster. 2 residues coordinate Mg(2+): aspartate 124 and lysine 125. Position 125 is an N6-carboxylysine (lysine 125). Cysteine 197 lines the [2Fe-2S] cluster pocket. Glutamate 493 serves as a coordination point for Mg(2+). The active-site Proton acceptor is serine 519.

It belongs to the IlvD/Edd family. As to quaternary structure, homodimer. It depends on [2Fe-2S] cluster as a cofactor. Mg(2+) serves as cofactor.

It carries out the reaction (2R)-2,3-dihydroxy-3-methylbutanoate = 3-methyl-2-oxobutanoate + H2O. It catalyses the reaction (2R,3R)-2,3-dihydroxy-3-methylpentanoate = (S)-3-methyl-2-oxopentanoate + H2O. It participates in amino-acid biosynthesis; L-isoleucine biosynthesis; L-isoleucine from 2-oxobutanoate: step 3/4. The protein operates within amino-acid biosynthesis; L-valine biosynthesis; L-valine from pyruvate: step 3/4. Functions in the biosynthesis of branched-chain amino acids. Catalyzes the dehydration of (2R,3R)-2,3-dihydroxy-3-methylpentanoate (2,3-dihydroxy-3-methylvalerate) into 2-oxo-3-methylpentanoate (2-oxo-3-methylvalerate) and of (2R)-2,3-dihydroxy-3-methylbutanoate (2,3-dihydroxyisovalerate) into 2-oxo-3-methylbutanoate (2-oxoisovalerate), the penultimate precursor to L-isoleucine and L-valine, respectively. The polypeptide is Dihydroxy-acid dehydratase (Bifidobacterium longum subsp. infantis (strain ATCC 15697 / DSM 20088 / JCM 1222 / NCTC 11817 / S12)).